A 147-amino-acid polypeptide reads, in one-letter code: Hemoglobin subunit epsilon (147 aa).

Residues 3 to 147 (HFTAEEKSTI…VATALAHKYH (145 aa)) form the Globin domain. 2 positions are modified to phosphoserine: Ser14 and Ser51. His64 and His93 together coordinate heme b.

It belongs to the globin family. As to quaternary structure, heterotetramer of two alpha chains and two epsilon chains in early embryonic hemoglobin Gower-2; two zeta chains and two epsilon chains in early embryonic hemoglobin Gower-1. As to expression, red blood cells.

Functionally, the epsilon chain is a beta-type chain of early mammalian embryonic hemoglobin. The chain is Hemoglobin subunit epsilon (HBE1) from Microcebus murinus (Gray mouse lemur).